The chain runs to 145 residues: uncharacterized protein (145 aa).

The helical transmembrane segment at 46–66 (FFFLFFLFFFFFFTFQFLVAF) threads the bilayer.

Its subcellular location is the membrane. This is an uncharacterized protein from Saccharomyces cerevisiae (strain ATCC 204508 / S288c) (Baker's yeast).